A 67-amino-acid chain; its full sequence is Probable tautomerase bsl7456 (67 aa).

P2 (proton acceptor; via imino nitrogen) is an active-site residue.

It belongs to the 4-oxalocrotonate tautomerase family.

This is Probable tautomerase bsl7456 from Bradyrhizobium diazoefficiens (strain JCM 10833 / BCRC 13528 / IAM 13628 / NBRC 14792 / USDA 110).